Consider the following 173-residue polypeptide: Crossover junction endodeoxyribonuclease RuvC (173 aa).

Catalysis depends on residues aspartate 11, glutamate 71, and aspartate 143. Aspartate 11, glutamate 71, and aspartate 143 together coordinate Mg(2+).

It belongs to the RuvC family. As to quaternary structure, homodimer which binds Holliday junction (HJ) DNA. The HJ becomes 2-fold symmetrical on binding to RuvC with unstacked arms; it has a different conformation from HJ DNA in complex with RuvA. In the full resolvosome a probable DNA-RuvA(4)-RuvB(12)-RuvC(2) complex forms which resolves the HJ. Mg(2+) is required as a cofactor.

The protein localises to the cytoplasm. It catalyses the reaction Endonucleolytic cleavage at a junction such as a reciprocal single-stranded crossover between two homologous DNA duplexes (Holliday junction).. In terms of biological role, the RuvA-RuvB-RuvC complex processes Holliday junction (HJ) DNA during genetic recombination and DNA repair. Endonuclease that resolves HJ intermediates. Cleaves cruciform DNA by making single-stranded nicks across the HJ at symmetrical positions within the homologous arms, yielding a 5'-phosphate and a 3'-hydroxyl group; requires a central core of homology in the junction. The consensus cleavage sequence is 5'-(A/T)TT(C/G)-3'. Cleavage occurs on the 3'-side of the TT dinucleotide at the point of strand exchange. HJ branch migration catalyzed by RuvA-RuvB allows RuvC to scan DNA until it finds its consensus sequence, where it cleaves and resolves the cruciform DNA. The chain is Crossover junction endodeoxyribonuclease RuvC from Brucella suis (strain ATCC 23445 / NCTC 10510).